The sequence spans 157 residues: 2-C-methyl-D-erythritol 2,4-cyclodiphosphate synthase (157 aa).

A divalent metal cation contacts are provided by aspartate 9 and histidine 11. Residues 9–11 (DVH) and 35–36 (HS) each bind 4-CDP-2-C-methyl-D-erythritol 2-phosphate. Histidine 43 contacts a divalent metal cation. Residues 57 to 59 (DIG), 62 to 66 (FPDTD), 101 to 107 (AEKPKMA), 133 to 136 (TTTE), phenylalanine 140, and arginine 143 contribute to the 4-CDP-2-C-methyl-D-erythritol 2-phosphate site.

Belongs to the IspF family. Homotrimer. A divalent metal cation serves as cofactor.

The catalysed reaction is 4-CDP-2-C-methyl-D-erythritol 2-phosphate = 2-C-methyl-D-erythritol 2,4-cyclic diphosphate + CMP. It functions in the pathway isoprenoid biosynthesis; isopentenyl diphosphate biosynthesis via DXP pathway; isopentenyl diphosphate from 1-deoxy-D-xylulose 5-phosphate: step 4/6. Functionally, involved in the biosynthesis of isopentenyl diphosphate (IPP) and dimethylallyl diphosphate (DMAPP), two major building blocks of isoprenoid compounds. Catalyzes the conversion of 4-diphosphocytidyl-2-C-methyl-D-erythritol 2-phosphate (CDP-ME2P) to 2-C-methyl-D-erythritol 2,4-cyclodiphosphate (ME-CPP) with a corresponding release of cytidine 5-monophosphate (CMP). This chain is 2-C-methyl-D-erythritol 2,4-cyclodiphosphate synthase, found in Listeria monocytogenes serovar 1/2a (strain ATCC BAA-679 / EGD-e).